The sequence spans 184 residues: ATP synthase subunit b, chloroplastic (184 aa).

Residues 27–49 (FATNPINLSVVLGVLIFFGKGVL) form a helical membrane-spanning segment.

The protein belongs to the ATPase B chain family. In terms of assembly, F-type ATPases have 2 components, F(1) - the catalytic core - and F(0) - the membrane proton channel. F(1) has five subunits: alpha(3), beta(3), gamma(1), delta(1), epsilon(1). F(0) has four main subunits: a(1), b(1), b'(1) and c(10-14). The alpha and beta chains form an alternating ring which encloses part of the gamma chain. F(1) is attached to F(0) by a central stalk formed by the gamma and epsilon chains, while a peripheral stalk is formed by the delta, b and b' chains.

The protein resides in the plastid. It localises to the chloroplast thylakoid membrane. In terms of biological role, f(1)F(0) ATP synthase produces ATP from ADP in the presence of a proton or sodium gradient. F-type ATPases consist of two structural domains, F(1) containing the extramembraneous catalytic core and F(0) containing the membrane proton channel, linked together by a central stalk and a peripheral stalk. During catalysis, ATP synthesis in the catalytic domain of F(1) is coupled via a rotary mechanism of the central stalk subunits to proton translocation. Its function is as follows. Component of the F(0) channel, it forms part of the peripheral stalk, linking F(1) to F(0). This is ATP synthase subunit b, chloroplastic from Ipomoea purpurea (Common morning glory).